Here is a 147-residue protein sequence, read N- to C-terminus: MKIVIQRVKRAQVSIDQQLRSSIGQGLLLLVGVGPDDSQEDMDYAVRKIVNMRIFSDAEGKMNLSIKDIDGEILSISQFTLHADTKKGNRPAFVKAAPPEMASNFYDAFNLALQQEVPTRTGIFGADMQVELVNDGPVTIILDTKNR.

The Gly-cisPro motif, important for rejection of L-amino acids motif lies at 136–137 (GP).

This sequence belongs to the DTD family. Homodimer.

The protein localises to the cytoplasm. It catalyses the reaction glycyl-tRNA(Ala) + H2O = tRNA(Ala) + glycine + H(+). The enzyme catalyses a D-aminoacyl-tRNA + H2O = a tRNA + a D-alpha-amino acid + H(+). An aminoacyl-tRNA editing enzyme that deacylates mischarged D-aminoacyl-tRNAs. Also deacylates mischarged glycyl-tRNA(Ala), protecting cells against glycine mischarging by AlaRS. Acts via tRNA-based rather than protein-based catalysis; rejects L-amino acids rather than detecting D-amino acids in the active site. By recycling D-aminoacyl-tRNA to D-amino acids and free tRNA molecules, this enzyme counteracts the toxicity associated with the formation of D-aminoacyl-tRNA entities in vivo and helps enforce protein L-homochirality. The sequence is that of D-aminoacyl-tRNA deacylase from Streptococcus sanguinis (strain SK36).